Reading from the N-terminus, the 31-residue chain is Cyclotide hyen-J (31 aa).

Residues 1-31 (GSVPCGESCVWIPCITSIAGCSCSNKVCYMD) constitute a cross-link (cyclopeptide (Gly-Asp)). 3 cysteine pairs are disulfide-bonded: cysteine 5–cysteine 21, cysteine 9–cysteine 23, and cysteine 14–cysteine 28.

Post-translationally, this is a cyclic peptide. In terms of tissue distribution, detected in seeds (at protein level).

Functionally, probably participates in a plant defense mechanism. The chain is Cyclotide hyen-J from Pigea enneasperma (Spade flower).